Consider the following 148-residue polypeptide: Deoxyuridine 5'-triphosphate nucleotidohydrolase (148 aa).

Substrate is bound by residues 68-70 (RSG), Asn-81, 85-87 (TID), and Lys-95.

It belongs to the dUTPase family. It depends on Mg(2+) as a cofactor.

The enzyme catalyses dUTP + H2O = dUMP + diphosphate + H(+). It participates in pyrimidine metabolism; dUMP biosynthesis; dUMP from dCTP (dUTP route): step 2/2. This enzyme is involved in nucleotide metabolism: it produces dUMP, the immediate precursor of thymidine nucleotides and it decreases the intracellular concentration of dUTP so that uracil cannot be incorporated into DNA. The protein is Deoxyuridine 5'-triphosphate nucleotidohydrolase of Rickettsia canadensis (strain McKiel).